The primary structure comprises 386 residues: Leupaxin (386 aa).

Met-1 is subject to N-acetylmethionine. An LD motif 1 motif is present at residues 3–15 (ELDALLEELERCT). At Ser-19 the chain carries Phosphoserine. Residues 19 to 52 (SEEYSNPVSCHLDQQSTEESKIPQTPKTLSSQGN) are disordered. Tyr-22 bears the Phosphotyrosine mark. Polar residues predominate over residues 22 to 52 (YSNPVSCHLDQQSTEESKIPQTPKTLSSQGN). Residue Ser-54 is modified to Phosphoserine. Tyr-62 bears the Phosphotyrosine mark. 2 consecutive short sequence motifs (LD motif) follow at residues 70–82 (NVYS…KESV) and 92–103 (QLDELMAHLSEM). Position 72 is a phosphotyrosine; by LYN (Tyr-72). At Ser-81 the chain carries Phosphoserine. LIM zinc-binding domains are found at residues 150-208 (GYCA…RLFS), 209-267 (PRCA…AMFS), 268-326 (PKCG…HRRG), and 327-386 (TLCH…LFSQ).

It belongs to the paxillin family. As to quaternary structure, interacts with unphosphorylated ITGA4. Interacts with AR and SRF. Interacts with PTK2B/PYK2, PTPN22 and PTPN12. Interacts (via LD motif 3) with LYN and the interaction is induced upon B-cell antigen receptor (BCR) activation. Interacts (via LD motif 3) with PTK2/FAK. In terms of processing, phosphorylated on tyrosine residues. Phosphorylation on Tyr-72 is important for its inhibitory function. Bombesin stimulates phosphorylation on Tyr-22, Tyr-62 and Tyr-72. Expressed in osteoclasts (at protein level). Highly expressed in vascular smooth muscle.

The protein localises to the cytoplasm. The protein resides in the cell junction. Its subcellular location is the focal adhesion. It localises to the nucleus. It is found in the perinuclear region. The protein localises to the cell projection. The protein resides in the podosome. Its subcellular location is the cell membrane. In terms of biological role, transcriptional coactivator for androgen receptor (AR) and serum response factor (SRF). Contributes to the regulation of cell adhesion, spreading and cell migration and acts as a negative regulator in integrin-mediated cell adhesion events. Suppresses the integrin-induced tyrosine phosphorylation of paxillin (PXN). May play a critical role as an adapter protein in the formation of the adhesion zone in osteoclasts. Negatively regulates B-cell antigen receptor (BCR) signaling. The chain is Leupaxin (Lpxn) from Mus musculus (Mouse).